The chain runs to 201 residues: MSRYKGPSLRIIRRLGELPGLTRKVVKKRKYPPGQHGQKSRKRSEYAIRLEEKQKLRYNYGLTERQLVQCVRRAKQMKGSTGQILLQLLEMRLDNIVFRLGMAPTIPASRQLVNHGHICVNNKVVSIPSYQCKPGDIITVKERNASKKIVETNLLFPGLANLPSHLEFDKSKLQGKVNDIIQREWVALEVNELLIVEFYSR.

Residues 91 to 153 (MRLDNIVFRL…NASKKIVETN (63 aa)) form the S4 RNA-binding domain.

This sequence belongs to the universal ribosomal protein uS4 family. Part of the 30S ribosomal subunit. Contacts protein S5. The interaction surface between S4 and S5 is involved in control of translational fidelity.

Its subcellular location is the plastid. The protein localises to the cyanelle. Functionally, one of the primary rRNA binding proteins, it binds directly to 16S rRNA where it nucleates assembly of the body of the 30S subunit. Its function is as follows. With S5 and S12 plays an important role in translational accuracy. In Cyanophora paradoxa, this protein is Small ribosomal subunit protein uS4c (rps4).